Reading from the N-terminus, the 421-residue chain is UDP-N-acetylglucosamine 1-carboxyvinyltransferase 1 (421 aa).

22–23 (KN) is a phosphoenolpyruvate binding site. Arginine 94 serves as a coordination point for UDP-N-acetyl-alpha-D-glucosamine. The active-site Proton donor is cysteine 118. Cysteine 118 is subject to 2-(S-cysteinyl)pyruvic acid O-phosphothioketal. UDP-N-acetyl-alpha-D-glucosamine-binding positions include 123-127 (RPIEL), aspartate 310, and valine 332.

Belongs to the EPSP synthase family. MurA subfamily.

The protein resides in the cytoplasm. It carries out the reaction phosphoenolpyruvate + UDP-N-acetyl-alpha-D-glucosamine = UDP-N-acetyl-3-O-(1-carboxyvinyl)-alpha-D-glucosamine + phosphate. Its pathway is cell wall biogenesis; peptidoglycan biosynthesis. Cell wall formation. Adds enolpyruvyl to UDP-N-acetylglucosamine. The sequence is that of UDP-N-acetylglucosamine 1-carboxyvinyltransferase 1 from Clostridium perfringens (strain 13 / Type A).